A 447-amino-acid chain; its full sequence is MSEASNKQMKLIKRLSDELVECILSFLPVQSTLQHRVLSKRYRDTWKLSRDLDFSGIFSVRRSQSEAVRIIEDVFIQHQGPEIDRFVLSLDHTGVEDKILSWVDTCLRKNIKELVLDFSSSKKVMEIPLNFSSSETLTVLKLQWCRFEIPNNLPKGLRLLKTLSLMRTEVTNEMIDSIFNNCIHLESLELVKCQMSGNGILTIYAHDHKKFKSLVVSCMPNLLSIFLDAPTLECYKYDGYAKTINVLKVNALEEAEFHYSRSKRRHSSDTVVDSMLACSAVHALTTTNILLEAITYRYLKGKLEKPLFKFENLREFKIFFKAPTFCTLFDIAEFLKECPKLEQFIIDIQNFTFEPQMYFWEIHHKAQIQNTSNNNYLLKCLTDVKIIGYKGHWHELDIVEFFVKNAPSLKRLELQMPKNAKNDAHTPDVARIKLIKTIFSGVKVTEV.

Residues 10-57 form the F-box domain; the sequence is KLIKRLSDELVECILSFLPVQSTLQHRVLSKRYRDTWKLSRDLDFSGI. The region spanning 384 to 416 is the FBD domain; sequence VKIIGYKGHWHELDIVEFFVKNAPSLKRLELQM.

This chain is Putative FBD-associated F-box protein At1g61330, found in Arabidopsis thaliana (Mouse-ear cress).